Here is a 346-residue protein sequence, read N- to C-terminus: c-di-GMP synthase (346 aa).

This sequence belongs to the CD-NTase family.

It catalyses the reaction 2 GTP = 3',3'-c-di-GMP + 2 diphosphate. In terms of biological role, cyclic nucleotide synthase (second messenger synthase) of a CBASS antivirus system. CBASS (cyclic oligonucleotide-based antiphage signaling system) provides immunity against bacteriophage. The CD-NTase protein synthesizes cyclic nucleotides in response to infection; these serve as specific second messenger signals. The signals activate a diverse range of effectors, leading to bacterial cell death and thus abortive phage infection. A type I-D(GG) CBASS system. Functionally, cyclic dinucleotide synthase that catalyzes the synthesis of c-di-GMP, has no activity with other NTP substrates. This chain is c-di-GMP synthase, found in Lachnospiraceae bacterium (strain RUG226).